Here is a 449-residue protein sequence, read N- to C-terminus: uncharacterized protein (449 aa).

Over residues 1-13 (MPKAPKTKLHHAP) the composition is skewed to basic residues. The disordered stretch occupies residues 1–125 (MPKAPKTKLH…SQEEEEYEEL (125 aa)). Ser22 bears the Phosphoserine mark. Over residues 73 to 84 (KPSQISAFISNG) the composition is skewed to polar residues. Ser156 carries the post-translational modification Phosphoserine.

It belongs to the bystin family.

This is an uncharacterized protein from Schizosaccharomyces pombe (strain 972 / ATCC 24843) (Fission yeast).